A 579-amino-acid chain; its full sequence is V-type ATP synthase alpha chain (579 aa).

Residue 227–234 (GGFGTGKT) coordinates ATP.

It belongs to the ATPase alpha/beta chains family.

It carries out the reaction ATP + H2O + 4 H(+)(in) = ADP + phosphate + 5 H(+)(out). Its function is as follows. Produces ATP from ADP in the presence of a proton gradient across the membrane. The V-type alpha chain is a catalytic subunit. The sequence is that of V-type ATP synthase alpha chain from Anaeromyxobacter dehalogenans (strain 2CP-1 / ATCC BAA-258).